Here is a 459-residue protein sequence, read N- to C-terminus: MSQDSNALEMIQNEGPKWDDGFDHDDVTKIYLVGGKTGIDFIKIDYVKSGKPKNGPFHGYSGGGFLQMFEIDNLKNEYLESVEGYYTNRSGEFIGAIQFKTNLRVSEIIGYSYWGLKKFKLAKHGNKIIGFQGSAEYRLKDLDAYFTPITPTRMEAQGGNGGTKWDDGGDHDSVTKIQVRINKEGIQYIKFNYVDKDGDPEKEQLHGSETGRGYTLEPFEINHSDKEYLLSIDGCYDEDSGVIQSLQLKTNIKTSEVMGDDEKGTKFTLGCNGHEIIGFHGSAQDNLNALGAYITTLTLTKLEYIGEGSDIWDDGTFEGVKKVSFYHNDGIVRCIEFDYVKDGKIETRVQGGKRGTGDFTKEEFTVDYPNEFLTSVEGTYRDNPGGTLITSLTFKTSNNRTSPILGKASNKTFLLESKGCALVGFHGASSDFFLYALGAYSFPMTSLAEAGRGAIHTSW.

Jacalin-type lectin domains are found at residues 2–148, 151–296, and 298–443; these read SQDS…YFTP, PTRM…YITT, and TLTK…YSFP.

This sequence belongs to the jacalin lectin family.

The polypeptide is Jacalin-related lectin 12 (JAL12) (Arabidopsis thaliana (Mouse-ear cress)).